The chain runs to 40 residues: Large ribosomal subunit protein bL36A (40 aa).

The protein belongs to the bacterial ribosomal protein bL36 family.

In Kineococcus radiotolerans (strain ATCC BAA-149 / DSM 14245 / SRS30216), this protein is Large ribosomal subunit protein bL36A.